The following is a 184-amino-acid chain: ATP synthase subunit b, chloroplastic (184 aa).

A helical membrane pass occupies residues 27 to 49 (LATNPINLSVVLGVLIFFGKGVL).

The protein belongs to the ATPase B chain family. F-type ATPases have 2 components, F(1) - the catalytic core - and F(0) - the membrane proton channel. F(1) has five subunits: alpha(3), beta(3), gamma(1), delta(1), epsilon(1). F(0) has four main subunits: a(1), b(1), b'(1) and c(10-14). The alpha and beta chains form an alternating ring which encloses part of the gamma chain. F(1) is attached to F(0) by a central stalk formed by the gamma and epsilon chains, while a peripheral stalk is formed by the delta, b and b' chains.

The protein resides in the plastid. It is found in the chloroplast thylakoid membrane. In terms of biological role, f(1)F(0) ATP synthase produces ATP from ADP in the presence of a proton or sodium gradient. F-type ATPases consist of two structural domains, F(1) containing the extramembraneous catalytic core and F(0) containing the membrane proton channel, linked together by a central stalk and a peripheral stalk. During catalysis, ATP synthesis in the catalytic domain of F(1) is coupled via a rotary mechanism of the central stalk subunits to proton translocation. Component of the F(0) channel, it forms part of the peripheral stalk, linking F(1) to F(0). This chain is ATP synthase subunit b, chloroplastic, found in Gossypium barbadense (Sea Island cotton).